Here is a 151-residue protein sequence, read N- to C-terminus: Calmodulin (151 aa).

EF-hand domains lie at 10–45 (EQIS…LGQN), 46–81 (PTEA…KMKD), 83–118 (DSEE…LGEK), and 119–151 (LTDE…MLSK). The Ca(2+) site is built by Asp-23, Asp-25, Asp-27, Ser-29, Glu-34, Asp-59, Asp-61, Asn-63, Thr-65, Glu-70, Asp-96, Asp-98, Asn-100, Glu-107, Asp-132, Asp-134, Asp-136, and Glu-143.

The protein belongs to the calmodulin family.

Calmodulin mediates the control of a large number of enzymes, ion channels and other proteins by Ca(2+). Among the enzymes to be stimulated by the calmodulin-Ca(2+) complex are a number of protein kinases and phosphatases. The sequence is that of Calmodulin from Pneumocystis carinii.